The sequence spans 189 residues: Phosphoheptose isomerase (189 aa).

The SIS domain occupies Val-34–Gly-189. Asn-49–Gly-51 contributes to the substrate binding site. Zn(2+)-binding residues include His-58 and Glu-62. Residues Glu-62, Asn-91–Asp-92, Ser-117–Ser-119, Ser-122, and Gln-169 contribute to the substrate site. Gln-169 and His-177 together coordinate Zn(2+).

The protein belongs to the SIS family. GmhA subfamily. Homotetramer. Requires Zn(2+) as cofactor.

It localises to the cytoplasm. The enzyme catalyses 2 D-sedoheptulose 7-phosphate = D-glycero-alpha-D-manno-heptose 7-phosphate + D-glycero-beta-D-manno-heptose 7-phosphate. It participates in carbohydrate biosynthesis; D-glycero-D-manno-heptose 7-phosphate biosynthesis; D-glycero-alpha-D-manno-heptose 7-phosphate and D-glycero-beta-D-manno-heptose 7-phosphate from sedoheptulose 7-phosphate: step 1/1. In terms of biological role, catalyzes the isomerization of sedoheptulose 7-phosphate in D-glycero-D-manno-heptose 7-phosphate. This chain is Phosphoheptose isomerase, found in Campylobacter concisus (strain 13826).